Here is a 776-residue protein sequence, read N- to C-terminus: Heat shock protein 110 (776 aa).

Residues 741–776 form a disordered region; sequence ILNKKKPAAPAPPKKEEPQPAAGDQPQSQPGEMDVD.

This sequence belongs to the heat shock protein 70 family.

The chain is Heat shock protein 110 from Caenorhabditis elegans.